A 727-amino-acid chain; its full sequence is Protein TITANIA (727 aa).

The interval 1-136 (MFGDSDGSKD…LASLLQPVPA (136 aa)) is disordered. Residues 14-25 (GAPPSTTDPPFP) are compositionally biased toward pro residues. Over residues 67 to 88 (DDGKHCVERDFLHLSAPKRGDP) the composition is skewed to basic and acidic residues. Positions 104 to 117 (DSLQLSLSLNSDGP) are enriched in low complexity. The PHD-type zinc-finger motif lies at 406–470 (ACTCSVCHKF…QFQCLACNHS (65 aa)). Residues 629-697 (VKCKEAEAKL…LEELKMLENS (69 aa)) are a coiled coil.

As to expression, widely expressed.

Its subcellular location is the nucleus. Functionally, probable transcription factor that functions as a regulator of metal transporter genes responsible for essential metals delivery to shoots and normal plant growth. Required for the maintenance of metal transporter gene expression, such as IRT1, IRT2, ZIP1, ZIP9, NRAMP1 and NRAMP5. The sequence is that of Protein TITANIA from Oryza sativa subsp. japonica (Rice).